A 532-amino-acid chain; its full sequence is Probable 1,4-beta-D-glucan cellobiohydrolase B (532 aa).

Residues 1 to 26 (MLASTFSYRMYKTALILAALLGSGQA) form the signal peptide. The tract at residues 27-461 (QQVGTSQAEV…SNIKVGPIGS (435 aa)) is catalytic. The active-site Nucleophile is glutamate 238. Glutamate 243 (proton donor) is an active-site residue. Asparagine 296 is a glycosylation site (N-linked (GlcNAc...) asparagine). Residues 462–495 (TFNSGGSNPGGGTTTTTTTQPTTTTTTAGNPGGT) form a disordered region. The thr-rich linker stretch occupies residues 462 to 496 (TFNSGGSNPGGGTTTTTTTQPTTTTTTAGNPGGTG). A compositionally biased stretch (low complexity) spans 475-490 (TTTTTTQPTTTTTTAG). In terms of domain architecture, CBM1 spans 496–532 (GVAQHYGQCGGIGWTGPTTCASPYTCQKLNDYYSQCL). 2 disulfide bridges follow: cysteine 504–cysteine 521 and cysteine 515–cysteine 531.

This sequence belongs to the glycosyl hydrolase 7 (cellulase C) family.

Its subcellular location is the secreted. The catalysed reaction is Hydrolysis of (1-&gt;4)-beta-D-glucosidic linkages in cellulose and cellotetraose, releasing cellobiose from the non-reducing ends of the chains.. In terms of biological role, the biological conversion of cellulose to glucose generally requires three types of hydrolytic enzymes: (1) Endoglucanases which cut internal beta-1,4-glucosidic bonds; (2) Exocellobiohydrolases that cut the disaccharide cellobiose from the non-reducing end of the cellulose polymer chain; (3) Beta-1,4-glucosidases which hydrolyze the cellobiose and other short cello-oligosaccharides to glucose. This Aspergillus fumigatus (strain CBS 144.89 / FGSC A1163 / CEA10) (Neosartorya fumigata) protein is Probable 1,4-beta-D-glucan cellobiohydrolase B (cbhB).